The following is a 342-amino-acid chain: Pre-mRNA-splicing factor 18 (342 aa).

An N-acetylmethionine modification is found at M1.

Belongs to the PRP18 family. As to quaternary structure, heterodimer with PPIH. Interacts with PRPF4 and with the spliceosome. Part of a complex containing U4/U6 snRNPs. Also detected in the cytoplasm. Detected in brain, heart, liver and skeletal muscle.

The protein localises to the nucleus speckle. Participates in the second step of pre-mRNA splicing. Down-regulates the expression of potassium channel subunits. The sequence is that of Pre-mRNA-splicing factor 18 (Prpf18) from Rattus norvegicus (Rat).